A 225-amino-acid polypeptide reads, in one-letter code: MAEGETESPRPKKCGPYISSVTSQSVNVVIRGVVLFFIGVFLALVLNLLQIQRNVTLFPPDVITSIFSSAWWVPPCCGTASAVIGLLYPCIDRHLGEPHKFKREWSSVMRCVAVFVGINHASAKVDFDNNFQFSLTLAALSVGLWWTFDRSRSGFGLGVGIAFLATVVTQLLVYNGVYQYTSPDFLYVRSWLPCIFFAGGITMGNIGRQLAMYECKVIAEKSHQE.

Residues 1–28 lie on the Cytoplasmic side of the membrane; the sequence is MAEGETESPRPKKCGPYISSVTSQSVNV. A helical membrane pass occupies residues 29–51; sequence VIRGVVLFFIGVFLALVLNLLQI. Residues 52–70 lie on the Lumenal side of the membrane; the sequence is QRNVTLFPPDVITSIFSSA. A helical membrane pass occupies residues 71-88; it reads WWVPPCCGTASAVIGLLY. At 89 to 103 the chain is on the cytoplasmic side; that stretch reads PCIDRHLGEPHKFKR. The chain crosses the membrane as a helical span at residues 104–126; sequence EWSSVMRCVAVFVGINHASAKVD. Topologically, residues 127 to 129 are lumenal; that stretch reads FDN. A helical membrane pass occupies residues 130 to 148; sequence NFQFSLTLAALSVGLWWTF. The Cytoplasmic segment spans residues 149 to 153; the sequence is DRSRS. S151 is modified (phosphoserine). Residues 154–175 form a helical membrane-spanning segment; sequence GFGLGVGIAFLATVVTQLLVYN. The Lumenal segment spans residues 176 to 189; the sequence is GVYQYTSPDFLYVR. A helical transmembrane segment spans residues 190–207; that stretch reads SWLPCIFFAGGITMGNIG. The Cytoplasmic segment spans residues 208-225; sequence RQLAMYECKVIAEKSHQE. C215 bears the Cysteine sulfenic acid (-SOH); alternate mark. C215 participates in a covalent cross-link: Glycyl cysteine thioester (Cys-Gly) (interchain with G-Cter in ubiquitin); alternate. A KxHxx motif is present at residues 219–225; that stretch reads AEKSHQE.

It belongs to the INSIG family. As to quaternary structure, interacts with SCAP; interaction is direct and only takes place in the presence of sterols; it prevents interaction between SCAP and the coat protein complex II (COPII). Associates with the SCAP-SREBP complex (composed of SCAP and SREBF1/SREBP1 or SREBF2/SREBP2); association is mediated via its interaction with SCAP and only takes place in the presence of sterols. Interacts with RNF139. Interacts with RNF145. Phosphorylation at Ser-151 by PCK1 reduces binding to oxysterol, disrupting the interaction between INSIG2 and SCAP, thereby promoting nuclear translocation of SREBP proteins (SREBF1/SREBP1 or SREBF2/SREBP2) and subsequent transcription of downstream lipogenesis-related genes. In terms of processing, polyubiquitinated by AMFR/gp78 at Cys-215 in some tissues such as adipose tissues, undifferentiated myoblasts and liver, leading to its degradation. In differentiated myotubes, Cys-215 oxidation prevents ubiquitination at the same site, resulting in protein stabilization. Post-translationally, oxidized at Cys-215 in differentiated myotubes, preventing ubiquitination at the same site, and resulting in protein stabilization. As to expression, expressed in liver, testis, kidney, spleen, intestine, brain and adrenal gland.

It is found in the endoplasmic reticulum membrane. Its function is as follows. Oxysterol-binding protein that mediates feedback control of cholesterol synthesis by controlling both endoplasmic reticulum to Golgi transport of SCAP and degradation of HMGCR. Acts as a negative regulator of cholesterol biosynthesis by mediating the retention of the SCAP-SREBP complex in the endoplasmic reticulum, thereby blocking the processing of sterol regulatory element-binding proteins (SREBPs) SREBF1/SREBP1 and SREBF2/SREBP2. Binds oxysterol, including 22-hydroxycholesterol, 24-hydroxycholesterol, 25-hydroxycholesterol and 27-hydroxycholesterol, regulating interaction with SCAP and retention of the SCAP-SREBP complex in the endoplasmic reticulum. In presence of oxysterol, interacts with SCAP, retaining the SCAP-SREBP complex in the endoplasmic reticulum, thereby preventing SCAP from escorting SREBF1/SREBP1 and SREBF2/SREBP2 to the Golgi. Sterol deprivation or phosphorylation by PCK1 reduce oxysterol-binding, disrupting the interaction between INSIG2 and SCAP, thereby promoting Golgi transport of the SCAP-SREBP complex, followed by processing and nuclear translocation of SREBF1/SREBP1 and SREBF2/SREBP2. Also regulates cholesterol synthesis by regulating degradation of HMGCR: initiates the sterol-mediated ubiquitin-mediated endoplasmic reticulum-associated degradation (ERAD) of HMGCR via recruitment of the reductase to the ubiquitin ligase RNF139. This is Insulin-induced gene 2 protein from Mus musculus (Mouse).